The sequence spans 99 residues: Large ribosomal subunit protein uL23 (99 aa).

Contacts protein L29, and trigger factor when it is bound to the ribosome. Part of the 50S ribosomal subunit.

Its function is as follows. One of the early assembly proteins it binds 23S rRNA. One of the proteins that surrounds the polypeptide exit tunnel on the outside of the ribosome. Forms the main docking site for trigger factor binding to the ribosome. In Rhodopseudomonas palustris (strain ATCC BAA-98 / CGA009), this protein is Large ribosomal subunit protein uL23.